The sequence spans 146 residues: Urease accessory protein UreE 1 (146 aa).

The protein belongs to the UreE family.

It is found in the cytoplasm. Functionally, involved in urease metallocenter assembly. Binds nickel. Probably functions as a nickel donor during metallocenter assembly. In Pseudomonas syringae pv. tomato (strain ATCC BAA-871 / DC3000), this protein is Urease accessory protein UreE 1.